The primary structure comprises 69 residues: Conotoxin reg3f (69 aa).

The first 20 residues, Met1–Ala20, serve as a signal peptide directing secretion. Positions Leu21–Arg52 are excised as a propeptide. 3 disulfides stabilise this stretch: Cys54–Cys68, Cys55–Cys66, and Cys60–Cys69. Cys69 carries the cysteine amide modification.

In terms of tissue distribution, expressed by the venom duct.

The protein localises to the secreted. The chain is Conotoxin reg3f from Conus regius (Crown cone).